The sequence spans 1433 residues: CAP-Gly domain-containing linker protein 1 (1433 aa).

Positions 1 to 51 are disordered; the sequence is MSMLKPSGLKAPSKTIKHGSTLLKAPASVATAPAEKAPSSEKSSSTTTADA. Over residues 32 to 49 the composition is skewed to low complexity; sequence APAEKAPSSEKSSSTTTA. In terms of domain architecture, CAP-Gly 1 spans 79 to 121; the sequence is GETQFAPGQWAGIVLDEPIGKNDGSVAGVRYFQCEPLRGIFTR. A disordered region spans residues 133 to 208; sequence DEANGTQTAH…VSNLSEAGSL (76 aa). The span at 140-168 shows a compositional bias: low complexity; sequence TAHASRATSPTSTSTASAVSASPAALLPS. Over residues 184 to 204 the composition is skewed to polar residues; that stretch reads TPSQFSNLSKTASGSVSNLSE. Positions 235–277 constitute a CAP-Gly 2 domain; it reads GETDFAKGEWCGVELDEPLGKNDGAVAGTRYFQCQPRYGLFAP. Over residues 319-333 the composition is skewed to low complexity; it reads SLSSVASSVSSKPSR. A disordered region spans residues 319–338; the sequence is SLSSVASSVSSKPSRTGLLT. A coiled-coil region spans residues 351-1353; sequence TTALQEALKE…CEAALNGNEE (1003 aa). The CCHC-type zinc-finger motif lies at 1412–1429; that stretch reads PYCDTCEMFGHWTADCND.

Its subcellular location is the cytoplasm. It localises to the cytoskeleton. The protein resides in the cytoplasmic vesicle membrane. The protein localises to the cell projection. It is found in the ruffle. Functionally, binds to the plus end of microtubules and regulates the dynamics of the microtubule cytoskeleton. Promotes microtubule growth and microtubule bundling. Links cytoplasmic vesicles to microtubules and thereby plays an important role in intracellular vesicle trafficking. Plays a role macropinocytosis and endosome trafficking. The chain is CAP-Gly domain-containing linker protein 1 (CLIP1) from Gallus gallus (Chicken).